Consider the following 491-residue polypeptide: Glutamate--tRNA ligase (491 aa).

The short motif at 10–20 (PSPTGYLHIGG) is the 'HIGH' region element. Residues 243–247 (KISKR) carry the 'KMSKS' region motif. ATP is bound at residue Lys246.

It belongs to the class-I aminoacyl-tRNA synthetase family. Glutamate--tRNA ligase type 1 subfamily. Monomer.

The protein localises to the cytoplasm. It catalyses the reaction tRNA(Glu) + L-glutamate + ATP = L-glutamyl-tRNA(Glu) + AMP + diphosphate. Catalyzes the attachment of glutamate to tRNA(Glu) in a two-step reaction: glutamate is first activated by ATP to form Glu-AMP and then transferred to the acceptor end of tRNA(Glu). The protein is Glutamate--tRNA ligase of Desulfotalea psychrophila (strain LSv54 / DSM 12343).